The primary structure comprises 409 residues: Endoglucanase B (409 aa).

Substrate contacts are provided by residues His61, 65–66 (WY), Tyr92, and His127. Residue Glu165 is the Proton donor of the active site. Residue Tyr228 participates in substrate binding. The active-site Nucleophile is the Glu254. Substrate-binding positions include 260–261 (AT), Trp288, and 293–295 (KDE). The interval 326-372 (IRESATTPPSDPTPPSDPDPGEPEPDPGEPDPTPPSDPGDYPAWDPN) is disordered. The span at 334 to 343 (PSDPTPPSDP) shows a compositional bias: pro residues. The segment covering 344-354 (DPGEPEPDPGE) has biased composition (acidic residues).

Belongs to the glycosyl hydrolase 5 (cellulase A) family.

It catalyses the reaction Endohydrolysis of (1-&gt;4)-beta-D-glucosidic linkages in cellulose, lichenin and cereal beta-D-glucans.. The protein is Endoglucanase B (celB) of Evansella cellulosilytica (strain ATCC 21833 / DSM 2522 / FERM P-1141 / JCM 9156 / N-4) (Bacillus cellulosilyticus).